The chain runs to 516 residues: uncharacterized protein (516 aa).

An N-terminal signal peptide occupies residues 1–22 (MLYRFWKTGLAIFMPGCILLSS). A lipid anchor (N-palmitoyl cysteine) is attached at Cys23. The S-diacylglycerol cysteine moiety is linked to residue Cys23.

This sequence belongs to the MG067/MG068/MG395 family.

The protein localises to the cell membrane. This is an uncharacterized protein from Mycoplasma genitalium (strain ATCC 33530 / DSM 19775 / NCTC 10195 / G37) (Mycoplasmoides genitalium).